The primary structure comprises 174 residues: Repair DNA polymerase X (174 aa).

The tract at residues 42–51 (REEKMLNDVD) is involved in ssDNA binding. 2 residues coordinate Mg(2+): Asp-49 and Asp-51. The cysteines at positions 81 and 86 are disulfide-linked. Mg(2+) is bound at residue Asp-100.

This sequence belongs to the DNA polymerase type-X family. It depends on Mg(2+) as a cofactor.

It is found in the virion. The catalysed reaction is DNA(n) + a 2'-deoxyribonucleoside 5'-triphosphate = DNA(n+1) + diphosphate. Its function is as follows. Error-prone polymerase lacking a proofreading 3'-5' exonuclease which catalyzes the gap-filling reaction during the DNA repair process. Specifically binds intermediates in the single-nucleotide base-excision repair process. Also catalyzes DNA polymerization with low nucleotide-insertion fidelity. Probably acts as a strategic DNA mutase, which gives rise to a rapid emergence of variants. Generates mismatched G-G pairs, in that case, the polymerase first binds the deoxynucleotide followed by mismatch formation. Together with the viral DNA ligase, fills the single nucleotide gaps generated by the AP endonuclease. Binds DNA with high affinity via the helix alphaE. This is Repair DNA polymerase X from African swine fever virus (isolate Tick/Malawi/Lil 20-1/1983) (ASFV).